The primary structure comprises 51 residues: Large ribosomal subunit protein eL39 (51 aa).

This sequence belongs to the eukaryotic ribosomal protein eL39 family.

This chain is Large ribosomal subunit protein eL39 (RpL39), found in Drosophila melanogaster (Fruit fly).